The primary structure comprises 275 residues: Digeranylgeranylglyceryl phosphate synthase (275 aa).

Helical transmembrane passes span 12-32 (VHNVVGSAVSAFMGYVIATTW), 35-55 (TPLFFLPLLVVSLIAAGGYVI), 88-108 (IVLFAVGLIISIPLGLIPFGF), 125-145 (KLGLVGNFIVALTSALSAYYG), 146-166 (GLASGSLLGNFIIPTIYIFFF), 200-220 (WIIAKIILGILIFTSPLPYFL), 224-244 (VIYLIGILALDVLLVYILILH), and 255-275 (SLMKIYAIGTLIVFTLGSLRI).

Belongs to the UbiA prenyltransferase family. DGGGP synthase subfamily. It depends on Mg(2+) as a cofactor.

Its subcellular location is the cell membrane. The enzyme catalyses sn-3-O-(geranylgeranyl)glycerol 1-phosphate + (2E,6E,10E)-geranylgeranyl diphosphate = 2,3-bis-O-(geranylgeranyl)-sn-glycerol 1-phosphate + diphosphate. Its pathway is membrane lipid metabolism; glycerophospholipid metabolism. Prenyltransferase that catalyzes the transfer of the geranylgeranyl moiety of geranylgeranyl diphosphate (GGPP) to the C2 hydroxyl of (S)-3-O-geranylgeranylglyceryl phosphate (GGGP). This reaction is the second ether-bond-formation step in the biosynthesis of archaeal membrane lipids. This Sulfolobus acidocaldarius (strain ATCC 33909 / DSM 639 / JCM 8929 / NBRC 15157 / NCIMB 11770) protein is Digeranylgeranylglyceryl phosphate synthase.